The primary structure comprises 226 residues: ATP synthase F(0) complex subunit a (226 aa).

Helical transmembrane passes span 6-26 (FASF…IIMF), 68-88 (WSLM…LGLL), 97-117 (QLSM…FTGF), 136-156 (LLIP…PVAL), 164-184 (ITAG…LLNI), and 189-209 (AFIT…VALI).

This sequence belongs to the ATPase A chain family. In terms of assembly, component of the ATP synthase complex composed at least of ATP5F1A/subunit alpha, ATP5F1B/subunit beta, ATP5MC1/subunit c (homooctomer), MT-ATP6/subunit a, MT-ATP8/subunit 8, ATP5ME/subunit e, ATP5MF/subunit f, ATP5MG/subunit g, ATP5MK/subunit k, ATP5MJ/subunit j, ATP5F1C/subunit gamma, ATP5F1D/subunit delta, ATP5F1E/subunit epsilon, ATP5PF/subunit F6, ATP5PB/subunit b, ATP5PD/subunit d, ATP5PO/subunit OSCP. ATP synthase complex consists of a soluble F(1) head domain (subunits alpha(3) and beta(3)) - the catalytic core - and a membrane F(0) domain - the membrane proton channel (subunits c, a, 8, e, f, g, k and j). These two domains are linked by a central stalk (subunits gamma, delta, and epsilon) rotating inside the F1 region and a stationary peripheral stalk (subunits F6, b, d, and OSCP). Interacts with DNAJC30; interaction is direct.

The protein localises to the mitochondrion inner membrane. It carries out the reaction H(+)(in) = H(+)(out). Functionally, subunit a, of the mitochondrial membrane ATP synthase complex (F(1)F(0) ATP synthase or Complex V) that produces ATP from ADP in the presence of a proton gradient across the membrane which is generated by electron transport complexes of the respiratory chain. ATP synthase complex consist of a soluble F(1) head domain - the catalytic core - and a membrane F(1) domain - the membrane proton channel. These two domains are linked by a central stalk rotating inside the F(1) region and a stationary peripheral stalk. During catalysis, ATP synthesis in the catalytic domain of F(1) is coupled via a rotary mechanism of the central stalk subunits to proton translocation. With the subunit c (ATP5MC1), forms the proton-conducting channel in the F(0) domain, that contains two crucial half-channels (inlet and outlet) that facilitate proton movement from the mitochondrial intermembrane space (IMS) into the matrix. Protons are taken up via the inlet half-channel and released through the outlet half-channel, following a Grotthuss mechanism. In Sus scrofa (Pig), this protein is ATP synthase F(0) complex subunit a.